Consider the following 1228-residue polypeptide: Minor fimbrium subunit Mfa5 (1228 aa).

A signal peptide spans 1 to 25 (MMKRYTIILAVFLLFCTVFTFQIKA). The VWFA domain occupies 144 to 267 (DVVMVIDQSS…QYPVKNVTTA (124 aa)).

Minor fimbriae are composed of a structural subunit, most often Mfa1, and the accessory subunits Mfa3, Mfa4 and Mfa5. Fimbrium assembly occurs by linear, head-to-tail oligomerization of fimbrial subunits. This is mediated via insertion of a C-terminal beta-strand from one subunit into a groove in the N-terminal domain of the following subunit.

It localises to the fimbrium. Its function is as follows. Accessory subunit of the minor fimbriae. These filamentous pili are attached to the cell surface; they mediate biofilm formation, adhesion onto host cells and onto other bacteria that are part of the oral microbiome. They play an important role in invasion of periodontal tissues and are recognized as major virulence factors. Fimbrium subunits from different strains have highly divergent sequences, and this correlates with pathogenicity. The polypeptide is Minor fimbrium subunit Mfa5 (Porphyromonas gingivalis (strain ATCC 33277 / DSM 20709 / CIP 103683 / JCM 12257 / NCTC 11834 / 2561)).